The primary structure comprises 351 residues: ADP-glucose phosphorylase (351 aa).

The interval 1-63 (MTSPSHASDR…QNPNPKPSSC (63 aa)) is disordered. Residue 41–44 (RAKR) participates in ADP-alpha-D-glucose binding. Positions 63 and 66 each coordinate Zn(2+). ADP-alpha-D-glucose contacts are provided by residues 72–74 (ECA) and Asn-94. His-133 contributes to the Zn(2+) binding site. ADP-alpha-D-glucose is bound by residues Asn-173 and 179–182 (GASM). Position 184 (His-184) interacts with Zn(2+). Catalysis depends on His-186, which acts as the Tele-AMP-histidine intermediate. Gln-188 is a binding site for ADP-alpha-D-glucose. Zn(2+)-binding residues include Cys-216, Cys-219, His-255, and His-310. ADP-alpha-D-glucose-binding positions include Gly-321 and 325–326 (FE).

Belongs to the galactose-1-phosphate uridylyltransferase type 1 family. In terms of assembly, homodimer. It depends on Zn(2+) as a cofactor.

The catalysed reaction is alpha-D-glucose 1-phosphate + ADP + H(+) = ADP-alpha-D-glucose + phosphate. Catalyzes the conversion of ADP-glucose and inorganic phosphate (Pi) into glucose-1-phosphate and ADP. Does not possess galactose-1-phosphate uridylyltransferase activity. The polypeptide is ADP-glucose phosphorylase (Arabidopsis thaliana (Mouse-ear cress)).